Consider the following 166-residue polypeptide: Small ribosomal subunit protein uS5 (166 aa).

In terms of domain architecture, S5 DRBM spans 12-75; it reads YIEKLVQVNR…EAARRNMIQV (64 aa).

Belongs to the universal ribosomal protein uS5 family. As to quaternary structure, part of the 30S ribosomal subunit. Contacts proteins S4 and S8.

In terms of biological role, with S4 and S12 plays an important role in translational accuracy. Its function is as follows. Located at the back of the 30S subunit body where it stabilizes the conformation of the head with respect to the body. The protein is Small ribosomal subunit protein uS5 of Pseudomonas fluorescens (strain SBW25).